Here is a 437-residue protein sequence, read N- to C-terminus: Enolase-related protein 1 (437 aa).

The substrate site is built by H160 and E169. The Proton donor role is filled by E212. Mg(2+) is bound by residues D247, E296, and D321. Substrate contacts are provided by E296 and D321. Residue K346 is the Proton acceptor of the active site. Residues 373 to 376 and K397 each bind substrate; that span reads SHRS.

This sequence belongs to the enolase family. Mg(2+) is required as a cofactor.

The catalysed reaction is (2R)-2-phosphoglycerate = phosphoenolpyruvate + H2O. The protein operates within carbohydrate degradation; glycolysis; pyruvate from D-glyceraldehyde 3-phosphate: step 4/5. This Saccharomyces cerevisiae (strain ATCC 204508 / S288c) (Baker's yeast) protein is Enolase-related protein 1 (ERR1).